The following is a 373-amino-acid chain: Chaperone protein DnaJ (373 aa).

Positions 5–70 constitute a J domain; the sequence is DYYELLEVDR…EKRALYDQYG (66 aa). The CR-type zinc-finger motif lies at 134–211; sequence GTQKEVHYSF…CSGKGYRIEK (78 aa). Zn(2+) contacts are provided by Cys147, Cys150, Cys163, Cys166, Cys185, Cys188, Cys199, and Cys202. CXXCXGXG motif repeat units follow at residues 147-154, 163-170, 185-192, and 199-206; these read CSACKGTG, CPECHGRG, CPRCHGQG, and CEECSGKG.

This sequence belongs to the DnaJ family. Homodimer. Zn(2+) is required as a cofactor.

It localises to the cytoplasm. Functionally, participates actively in the response to hyperosmotic and heat shock by preventing the aggregation of stress-denatured proteins and by disaggregating proteins, also in an autonomous, DnaK-independent fashion. Unfolded proteins bind initially to DnaJ; upon interaction with the DnaJ-bound protein, DnaK hydrolyzes its bound ATP, resulting in the formation of a stable complex. GrpE releases ADP from DnaK; ATP binding to DnaK triggers the release of the substrate protein, thus completing the reaction cycle. Several rounds of ATP-dependent interactions between DnaJ, DnaK and GrpE are required for fully efficient folding. Also involved, together with DnaK and GrpE, in the DNA replication of plasmids through activation of initiation proteins. The protein is Chaperone protein DnaJ of Nitratiruptor sp. (strain SB155-2).